Reading from the N-terminus, the 302-residue chain is tRNA pseudouridine synthase B (302 aa).

Asp-42 serves as the catalytic Nucleophile.

The protein belongs to the pseudouridine synthase TruB family. Type 1 subfamily.

It carries out the reaction uridine(55) in tRNA = pseudouridine(55) in tRNA. Its function is as follows. Responsible for synthesis of pseudouridine from uracil-55 in the psi GC loop of transfer RNAs. This chain is tRNA pseudouridine synthase B, found in Leifsonia xyli subsp. xyli (strain CTCB07).